The chain runs to 63 residues: Large ribosomal subunit protein uL30 (63 aa).

Belongs to the universal ribosomal protein uL30 family. As to quaternary structure, part of the 50S ribosomal subunit.

This is Large ribosomal subunit protein uL30 from Rickettsia massiliae (strain Mtu5).